Here is a 298-residue protein sequence, read N- to C-terminus: Glycine--tRNA ligase alpha subunit (298 aa).

This sequence belongs to the class-II aminoacyl-tRNA synthetase family. Tetramer of two alpha and two beta subunits.

Its subcellular location is the cytoplasm. The catalysed reaction is tRNA(Gly) + glycine + ATP = glycyl-tRNA(Gly) + AMP + diphosphate. This chain is Glycine--tRNA ligase alpha subunit, found in Neisseria meningitidis serogroup C / serotype 2a (strain ATCC 700532 / DSM 15464 / FAM18).